The following is a 158-amino-acid chain: 2-C-methyl-D-erythritol 2,4-cyclodiphosphate synthase (158 aa).

Residues Asp9 and His11 each contribute to the a divalent metal cation site. 4-CDP-2-C-methyl-D-erythritol 2-phosphate contacts are provided by residues 9–11 (DVH) and 35–36 (HS). His43 is an a divalent metal cation binding site. Residues 57–59 (DIG), 62–66 (FPDTD), 133–136 (TTTE), Phe140, and Arg143 contribute to the 4-CDP-2-C-methyl-D-erythritol 2-phosphate site.

This sequence belongs to the IspF family. In terms of assembly, homotrimer. It depends on a divalent metal cation as a cofactor.

The enzyme catalyses 4-CDP-2-C-methyl-D-erythritol 2-phosphate = 2-C-methyl-D-erythritol 2,4-cyclic diphosphate + CMP. The protein operates within isoprenoid biosynthesis; isopentenyl diphosphate biosynthesis via DXP pathway; isopentenyl diphosphate from 1-deoxy-D-xylulose 5-phosphate: step 4/6. Its function is as follows. Involved in the biosynthesis of isopentenyl diphosphate (IPP) and dimethylallyl diphosphate (DMAPP), two major building blocks of isoprenoid compounds. Catalyzes the conversion of 4-diphosphocytidyl-2-C-methyl-D-erythritol 2-phosphate (CDP-ME2P) to 2-C-methyl-D-erythritol 2,4-cyclodiphosphate (ME-CPP) with a corresponding release of cytidine 5-monophosphate (CMP). The polypeptide is 2-C-methyl-D-erythritol 2,4-cyclodiphosphate synthase (Haemophilus influenzae (strain PittEE)).